The sequence spans 30 residues: Cyclotide cter-G (30 aa).

A cross-link (cyclopeptide (Gly-Asn)) is located at residues 1–30 (GLPCGESCVFIPCITTVVGCSCKNKVCYNN). 3 disulfides stabilise this stretch: C4–C20, C8–C22, and C13–C27.

Contains 3 disulfide bonds. Post-translationally, this is a cyclic peptide.

Probably participates in a plant defense mechanism. This is Cyclotide cter-G from Clitoria ternatea (Butterfly pea).